The primary structure comprises 45 residues: Bomanin Short 2 (45 aa).

The signal sequence occupies residues 1–20 (MKFFSVVTVFVFGLLALANA). Positions 21 to 27 (VPLSPDP) are cleaved as a propeptide — removed by a dipeptidylpeptidase. A disulfide bond links Cys36 and Cys39. Residue Gly43 is modified to Glycine amide.

In terms of tissue distribution, hemolymph (at protein level).

The protein resides in the secreted. Functionally, secreted immune-induced peptide induced by Toll signaling. Has a role in resistance to bacterial and fungal infections. The chain is Bomanin Short 2 from Drosophila melanogaster (Fruit fly).